The sequence spans 126 residues: MSDTQHQVNVRVDTRYLPEQSAPEQNRFAFAYTVTIENQGEVPAQLLSRHWIITDGDGRTQEVRGAGVVGEQPLIAPGAQHTYTSGTVLATRVGSMRGSYQMLGSDGIAFDAAIPVFRLAVPGALH.

An ApaG domain is found at 2 to 126; that stretch reads SDTQHQVNVR…FRLAVPGALH (125 aa).

This Pseudomonas aeruginosa (strain LESB58) protein is Protein ApaG.